The sequence spans 171 residues: uncharacterized protein (171 aa).

Belongs to the mimivirus L87/L94 family.

This is an uncharacterized protein from Acanthamoeba polyphaga (Amoeba).